Consider the following 206-residue polypeptide: Platelet glycoprotein Ib beta chain (206 aa).

An N-terminal signal peptide occupies residues 1–26 (MGSRPRGALSLLLLLLAPPSRPASGC). 2 disulfide bridges follow: C26/C32 and C30/C39. An LRRNT domain is found at 27 to 55 (PAPCRCSETRVDCGRRGLTWASLPAAFPP). The Extracellular portion of the chain corresponds to 27-150 (PAPCRCSETR…CAPGLLCWGA (124 aa)). Residues 60–83 (LVLTDNNLTALPPGLLDTLPALRR) form an LRR repeat. One can recognise an LRRCT domain in the interval 89-143 (NPWRCDCRLLPLRAWLAGRPEREFYRDLRCVAPLALRGRLLPYVAEDELRAACAP). Cystine bridges form between C93–C118 and C95–C141. Residues 151–171 (LVAQLALLVLGLLHALLLALL) form a helical membrane-spanning segment. Residues 172 to 206 (LSRLRRLRAQARARSTREFSLTAPLVAESAGGGAS) lie on the Cytoplasmic side of the membrane. S186 is subject to Phosphoserine. S191 carries the post-translational modification Phosphoserine; by PKA. The residue at position 193 (T193) is a Phosphothreonine. A Phosphoserine modification is found at S200.

In terms of assembly, two GP-Ib beta are disulfide-linked to one GP-Ib alpha. GP-IX is complexed with the GP-Ib heterodimer via a non covalent linkage. Interacts with TRAF4.

The protein resides in the membrane. Gp-Ib, a surface membrane protein of platelets, participates in the formation of platelet plugs by binding to von Willebrand factor, which is already bound to the subendothelium. The polypeptide is Platelet glycoprotein Ib beta chain (Gp1bb) (Rattus norvegicus (Rat)).